The primary structure comprises 1124 residues: Angiopoietin-1 receptor (1124 aa).

The signal sequence occupies residues Met-1–Gly-22. At Ala-23–Leu-748 the chain is on the extracellular side. Cys-44 and Cys-102 are joined by a disulfide. An Ig-like C2-type 1 domain is found at Cys-44–Ser-123. N-linked (GlcNAc...) asparagine glycans are attached at residues Asn-140 and Asn-158. 3 consecutive EGF-like domains span residues Arg-210–Glu-252, Ala-254–Asn-299, and Ala-301–Glu-341. 13 disulfides stabilise this stretch: Cys-211–Cys-220, Cys-224–Cys-233, Cys-227–Cys-240, Cys-242–Cys-251, Cys-255–Cys-264, Cys-268–Cys-274, Cys-280–Cys-287, Cys-289–Cys-298, Cys-302–Cys-311, Cys-315–Cys-323, Cys-317–Cys-329, Cys-331–Cys-340, and Cys-370–Cys-424. In terms of domain architecture, Ig-like C2-type 2 spans Pro-350–Ser-440. N-linked (GlcNAc...) asparagine glycosylation is found at Asn-399, Asn-438, Asn-464, Asn-560, Asn-596, Asn-649, and Asn-691. 3 Fibronectin type-III domains span residues Pro-447 to Ile-541, Pro-545 to Asp-636, and Gln-641 to Ser-735. The helical transmembrane segment at Ile-749–Ile-769 threads the bilayer. At Leu-770–Ala-1124 the chain is on the cytoplasmic side. Positions Ile-824–Leu-1096 constitute a Protein kinase domain. Residues Ile-830–Val-838 and Lys-855 contribute to the ATP site. Tyr-860 bears the Phosphotyrosine; by autocatalysis mark. The active-site Proton acceptor is the Asp-964. Tyr-992, Tyr-1102, and Tyr-1108 each carry phosphotyrosine; by autocatalysis.

The protein belongs to the protein kinase superfamily. Tyr protein kinase family. Tie subfamily. Homodimer. Heterodimer with TIE1. Interacts with ANGPT1, ANGPT2 and ANGPT4. At cell-cell contacts in quiescent cells, forms a signaling complex composed of ANGPT1 plus TEK molecules from two adjoining cells. In the absence of endothelial cell-cell contacts, interaction with ANGPT1 mediates contacts with the extracellular matrix. Interacts with PTPRB; this promotes endothelial cell-cell adhesion. Interacts with DOK2, GRB2, GRB7, GRB14, PIK3R1 and PTPN11/SHP2. Colocalizes with DOK2 at contacts with the extracellular matrix in migrating cells. Interacts (tyrosine phosphorylated) with TNIP2. Interacts (tyrosine phosphorylated) with SHC1 (via SH2 domain). Post-translationally, proteolytic processing leads to the shedding of the extracellular domain (soluble TIE-2 alias sTIE-2). In terms of processing, autophosphorylated on tyrosine residues in response to ligand binding. Autophosphorylation occurs in trans, i.e. one subunit of the dimeric receptor phosphorylates tyrosine residues on the other subunit. Autophosphorylation occurs in a sequential manner, where Tyr-992 in the kinase activation loop is phosphorylated first, followed by autophosphorylation at Tyr-1108 and at additional tyrosine residues. ANGPT1-induced phosphorylation is impaired during hypoxia, due to increased expression of ANGPT2. Phosphorylation is important for interaction with GRB14, PIK3R1 and PTPN11. Phosphorylation at Tyr-1102 is important for interaction with SHC1, GRB2 and GRB7. Phosphorylation at Tyr-1108 is important for interaction with DOK2 and for coupling to downstream signal transduction pathways in endothelial cells. Dephosphorylated by PTPRB. Ubiquitinated. The phosphorylated receptor is ubiquitinated and internalized, leading to its degradation. As to expression, detected in umbilical vein endothelial cells. Proteolytic processing gives rise to a soluble extracellular domain that is detected in blood plasma (at protein level). Predominantly expressed in endothelial cells and their progenitors, the angioblasts. Has been directly found in placenta and lung, with a lower level in umbilical vein endothelial cells, brain and kidney.

Its subcellular location is the cell membrane. The protein localises to the cell junction. It is found in the focal adhesion. The protein resides in the cytoplasm. It localises to the cytoskeleton. Its subcellular location is the secreted. The catalysed reaction is L-tyrosyl-[protein] + ATP = O-phospho-L-tyrosyl-[protein] + ADP + H(+). With respect to regulation, angiopoietin binding leads to receptor dimerization and activation by autophosphorylation at Tyr-992 on the kinase activation loop. Inhibited by staurosporine, K252a, PP2, damnacanthal, SB203580, CEP-11207, CEP-11981 and CE-245677. Inhibited by triazine, thienopyrimidine and thiazolopyrimidine derivatives. Tyrosine-protein kinase that acts as a cell-surface receptor for ANGPT1, ANGPT2 and ANGPT4 and regulates angiogenesis, endothelial cell survival, proliferation, migration, adhesion and cell spreading, reorganization of the actin cytoskeleton, but also maintenance of vascular quiescence. Has anti-inflammatory effects by preventing the leakage of pro-inflammatory plasma proteins and leukocytes from blood vessels. Required for normal angiogenesis and heart development during embryogenesis. Required for post-natal hematopoiesis. After birth, activates or inhibits angiogenesis, depending on the context. Inhibits angiogenesis and promotes vascular stability in quiescent vessels, where endothelial cells have tight contacts. In quiescent vessels, ANGPT1 oligomers recruit TEK to cell-cell contacts, forming complexes with TEK molecules from adjoining cells, and this leads to preferential activation of phosphatidylinositol 3-kinase and the AKT1 signaling cascades. In migrating endothelial cells that lack cell-cell adhesions, ANGT1 recruits TEK to contacts with the extracellular matrix, leading to the formation of focal adhesion complexes, activation of PTK2/FAK and of the downstream kinases MAPK1/ERK2 and MAPK3/ERK1, and ultimately to the stimulation of sprouting angiogenesis. ANGPT1 signaling triggers receptor dimerization and autophosphorylation at specific tyrosine residues that then serve as binding sites for scaffold proteins and effectors. Signaling is modulated by ANGPT2 that has lower affinity for TEK, can promote TEK autophosphorylation in the absence of ANGPT1, but inhibits ANGPT1-mediated signaling by competing for the same binding site. Signaling is also modulated by formation of heterodimers with TIE1, and by proteolytic processing that gives rise to a soluble TEK extracellular domain. The soluble extracellular domain modulates signaling by functioning as decoy receptor for angiopoietins. TEK phosphorylates DOK2, GRB7, GRB14, PIK3R1; SHC1 and TIE1. This chain is Angiopoietin-1 receptor, found in Homo sapiens (Human).